The sequence spans 694 residues: Elongation factor G (694 aa).

Residues 8 to 282 enclose the tr-type G domain; sequence DRLRNIGIMA…AIVDYLPSPL (275 aa). Residues 17–24, 81–85, and 135–138 contribute to the GTP site; these read AHIDAGKT, DTPGH, and NKMD. The tract at residues 284-303 is disordered; sequence IPPVQGTDPETGEPAERKAD.

The protein belongs to the TRAFAC class translation factor GTPase superfamily. Classic translation factor GTPase family. EF-G/EF-2 subfamily.

The protein resides in the cytoplasm. In terms of biological role, catalyzes the GTP-dependent ribosomal translocation step during translation elongation. During this step, the ribosome changes from the pre-translocational (PRE) to the post-translocational (POST) state as the newly formed A-site-bound peptidyl-tRNA and P-site-bound deacylated tRNA move to the P and E sites, respectively. Catalyzes the coordinated movement of the two tRNA molecules, the mRNA and conformational changes in the ribosome. The sequence is that of Elongation factor G from Symbiobacterium thermophilum (strain DSM 24528 / JCM 14929 / IAM 14863 / T).